Reading from the N-terminus, the 389-residue chain is SH2 domain-containing protein 2A (389 aa).

Residues 41–63 (AASPQAPEAASNTGNAERAEEVP) form a disordered region. One can recognise an SH2 domain in the interval 95–186 (WFHGFITRRE…PYGETLTEPL (92 aa)). The segment at 190 to 295 (TPEPAGLSLR…PIAFYAMGRG (106 aa)) is disordered. The segment covering 203-216 (SNFGSKSQDPNPQY) has biased composition (polar residues). Phosphoserine is present on serine 217. 2 consecutive short sequence motifs (SH3-binding) follow at residues 244-250 (RPKPPIP) and 272-278 (RPKPSNP). Pro residues predominate over residues 245 to 256 (PKPPIPAKPQLP). Serine 296 carries the post-translational modification Phosphoserine. The segment at 324–389 (KSWSRPVPGG…QAWLPLGPPQ (66 aa)) is disordered. Residues 337 to 348 (GGSQLHSENSVI) show a composition bias toward polar residues. Residues 352–361 (PPLPHQPPPA) are compositionally biased toward pro residues.

Interacts with KDR. Interacts with TXK and ITK. Post-translationally, phosphorylated on tyrosine residues. Expression limited to tissues of the immune system and, in particular, activated T-cells. Expressed in peripheral blood leukocytes, thymus and spleen. Much lower expression or undetectable, in brain, placenta, skeletal muscle, prostate, testis, ovary, small intestine, and colon. Expressed at low levels in unstimulated T-cells, but not expressed in normal resting or activated B-cells. According to PubMed:10692392, expression is not restricted to activated T-cells, but strongly expressed in blood cell lineages, the endothelium and other cell and tissue types, such as heart, lung, and liver.

Its subcellular location is the cytoplasm. In terms of biological role, could be a T-cell-specific adapter protein involved in the control of T-cell activation. May play a role in the CD4-p56-LCK-dependent signal transduction pathway. Could also play an important role in normal and pathological angiogenesis. Could be an adapter protein that facilitates and regulates interaction of KDR with effector proteins important to endothelial cell survival and proliferation. This Homo sapiens (Human) protein is SH2 domain-containing protein 2A (SH2D2A).